Reading from the N-terminus, the 431-residue chain is Keratin, type I cytoskeletal 40 (431 aa).

A head region spans residues 1 to 89; the sequence is MASEGSPDCC…CEEGTFNSNE (89 aa). In terms of domain architecture, IF rod spans 89–400; it reads EKETMQFLND…GLLEKEDSRL (312 aa). The segment at 90–124 is coil 1A; sequence KETMQFLNDRLASYLERVRSLEENNAELECRIREQ. The interval 125 to 135 is linker 1; the sequence is CEPDATPVCPD. The interval 136-236 is coil 1B; that stretch reads YQRYFDTIEE…HEEEVNLLRE (101 aa). A linker 12 region spans residues 237–252; the sequence is QLGDRLNVELDTAPTV. The segment at 253–396 is coil 2; that stretch reads DLNKVLDEMR…NTYRGLLEKE (144 aa). The segment at 397–431 is tail; sequence DSRLPCNPGSTASISNSACEPCSAYVICTVENCCA.

The protein belongs to the intermediate filament family. Heterotetramer of two type I and two type II keratins.

Functionally, may play a role in late hair differentiation. The sequence is that of Keratin, type I cytoskeletal 40 (Krt40) from Rattus norvegicus (Rat).